The sequence spans 1892 residues: Alpha-2-macroglobulin (1892 aa).

An N-terminal signal peptide occupies residues 1–23 (MKNIFRKFVFTIFVCLINLQLIA). A cross-link (isoglutamyl cysteine thioester (Cys-Gln)) is located at residues 1441-1444 (CTEQ).

It belongs to the protease inhibitor I39 (alpha-2-macroglobulin) family. Bacterial alpha-2-macroglobulin subfamily.

Functionally, protects the bacterial cell from host peptidases. In Rickettsia conorii (strain ATCC VR-613 / Malish 7), this protein is Alpha-2-macroglobulin.